The primary structure comprises 499 residues: Aldehyde dehydrogenase 1 (499 aa).

Residues 164-166 (IPW), 164-167 (IPWN), 190-193 (KPAE), 223-224 (GS), 243-244 (GS), 243-248 (GSTKVG), and 266-268 (ELG) each bind NAD(+). Glu266 serves as the catalytic Proton acceptor. The active-site Nucleophile is Cys300. NAD(+)-binding positions include 346-350 (QQYEK) and 397-399 (EIF).

Belongs to the aldehyde dehydrogenase family. In terms of assembly, homotetramer. As to expression, expressed in flowers and disk florets.

The enzyme catalyses an aldehyde + NAD(+) + H2O = a carboxylate + NADH + 2 H(+). The catalysed reaction is an aldehyde + NADP(+) + H2O = a carboxylate + NADPH + 2 H(+). It catalyses the reaction octanal + NADP(+) + H2O = octanoate + NADPH + 2 H(+). It carries out the reaction (1R,3R)-chrysanthemal + NAD(+) + H2O = (1R,3R)-chrysanthemate + NADH + 2 H(+). The enzyme catalyses (1R,3R)-chrysanthemal + NADP(+) + H2O = (1R,3R)-chrysanthemate + NADPH + 2 H(+). The catalysed reaction is (E)-hept-2-enal + NADP(+) + H2O = (E)-hept-2-enoate + NADPH + 2 H(+). It catalyses the reaction dodecanal + NADP(+) + H2O = dodecanoate + NADPH + 2 H(+). It carries out the reaction citral + NADP(+) + H2O = 3,7-dimethylocta-2,6-dienoate + NADPH + 2 H(+). The enzyme catalyses perillyl aldehyde + NADP(+) + H2O = perillate + NADPH + 2 H(+). The catalysed reaction is (2E,6E)-farnesal + NADP(+) + H2O = (2E,6E)-farnesoate + NADPH + 2 H(+). It catalyses the reaction (S)-(-)-citronellal + NADP(+) + H2O = (S)-(-)-citronellate + NADPH + 2 H(+). It functions in the pathway isoprenoid biosynthesis. In terms of biological role, component of the monoterpenoid pyrethrins biosynthesis; pyrethrins are widely used plant-derived pesticide. Mediates the conversion of trans-chrysanthemal into trans-chrysanthemic acid. Can also use octanal, hept-2-enal, dodecanal, citral, farnesal, citronellal and perillyl aldehyde as substrates. This is Aldehyde dehydrogenase 1 from Tanacetum cinerariifolium (Dalmatian daisy).